A 315-amino-acid polypeptide reads, in one-letter code: Transposase for insertion sequence element IS640 (315 aa).

An HTH IS21-type domain is found at 5–66 (EDFYMIKQMR…PFMDYIDMRL (62 aa)). The Integrase catalytic domain maps to 111 to 285 (FETQPGYQLQ…TPEQRSRWSR (175 aa)).

It belongs to the transposase IS21/IS408/IS1162 family.

Functionally, involved in the transposition of the insertion sequence. The sequence is that of Transposase for insertion sequence element IS640 (istA) from Shigella sonnei.